Here is a 981-residue protein sequence, read N- to C-terminus: Mediator of RNA polymerase II transcription subunit 5 (981 aa).

Belongs to the Mediator complex subunit 5 family. Component of the Mediator complex.

Its subcellular location is the nucleus. Functionally, component of the Mediator complex, a coactivator involved in the regulated transcription of nearly all RNA polymerase II-dependent genes. Mediator functions as a bridge to convey information from gene-specific regulatory proteins to the basal RNA polymerase II transcription machinery. Mediator is recruited to promoters by direct interactions with regulatory proteins and serves as a scaffold for the assembly of a functional preinitiation complex with RNA polymerase II and the general transcription factors. This Scheffersomyces stipitis (strain ATCC 58785 / CBS 6054 / NBRC 10063 / NRRL Y-11545) (Yeast) protein is Mediator of RNA polymerase II transcription subunit 5 (NUT1).